The sequence spans 398 residues: MKQLTILGSTGSIGCSTLDVVRHNPEHFRVVALVAGKNVTRMVEQCLEFSPRYAVMDDEASAKLLKTMLQQQGSRTEVLSGQQAACDMAALEEVDQVMAAIVGAAGLLPTLAAIRAGKTILLANKESLVTCGRLFMDAVKQSKAQLLPVDSEHNAIFQSLPQPIQHNLGYADLEQNGVVSILLTGSGGPFRETPLRDLATMTPDQACRHPNWSMGRKISVDSATMMNKGLEYIEARWLFNASASQMEVLIHPQSVIHSMVRYQDGSVLAQLGEPDMRTPIAHTMAWPNRVNSGVKPLDFCKLSALTFAAPDYERYPCLKLAMEAFEQGQAATTALNAANEITVAAFLAQQIRFTDIAALNLSVLEKMDMREPQCVDDVLSVDANASEVARKEVMRLAS.

NADPH is bound by residues Thr-10, Gly-11, Ser-12, Ile-13, Gly-36, Lys-37, Asn-38, and Asn-124. Lys-125 provides a ligand contact to 1-deoxy-D-xylulose 5-phosphate. Glu-126 lines the NADPH pocket. Asp-150 lines the Mn(2+) pocket. 1-deoxy-D-xylulose 5-phosphate-binding residues include Ser-151, Glu-152, Ser-186, and His-209. Glu-152 contacts Mn(2+). Gly-215 contacts NADPH. Residues Ser-222, Asn-227, Lys-228, and Glu-231 each coordinate 1-deoxy-D-xylulose 5-phosphate. Position 231 (Glu-231) interacts with Mn(2+).

It belongs to the DXR family. As to quaternary structure, homodimer. It depends on Mg(2+) as a cofactor. The cofactor is Mn(2+).

It catalyses the reaction 2-C-methyl-D-erythritol 4-phosphate + NADP(+) = 1-deoxy-D-xylulose 5-phosphate + NADPH + H(+). It functions in the pathway isoprenoid biosynthesis; isopentenyl diphosphate biosynthesis via DXP pathway; isopentenyl diphosphate from 1-deoxy-D-xylulose 5-phosphate: step 1/6. Catalyzes the NADPH-dependent rearrangement and reduction of 1-deoxy-D-xylulose-5-phosphate (DXP) to 2-C-methyl-D-erythritol 4-phosphate (MEP). The protein is 1-deoxy-D-xylulose 5-phosphate reductoisomerase of Shigella flexneri.